Reading from the N-terminus, the 113-residue chain is Nucleoid-associated protein RHA1_ro04210 (113 aa).

It belongs to the YbaB/EbfC family. As to quaternary structure, homodimer.

Its subcellular location is the cytoplasm. The protein resides in the nucleoid. In terms of biological role, binds to DNA and alters its conformation. May be involved in regulation of gene expression, nucleoid organization and DNA protection. This is Nucleoid-associated protein RHA1_ro04210 from Rhodococcus jostii (strain RHA1).